The chain runs to 213 residues: Vacuolar protein sorting-associated protein 32 homolog 1 (213 aa).

Coiled-coil stretches lie at residues 11-42 (KQET…KKAT) and 118-176 (TNID…QLLQ). The segment at 180-213 (IHVPQGNKPARAPAQKQPTAEEDELAALQAEMAL) is disordered.

It belongs to the SNF7 family. In terms of assembly, component of the endosomal sorting required for transport complex III (ESCRT-III), composed at least of VPS2, VPS20, VPS24 and VPS32. Interacts with SKD1. Interacts with BRO1/ALIX.

It is found in the endosome. In terms of biological role, component of the ESCRT-III complex, which is required for multivesicular bodies (MVBs) formation and sorting of endosomal cargo proteins into MVBs. The ESCRT-III complex is probably involved in the concentration of MVB cargo. The polypeptide is Vacuolar protein sorting-associated protein 32 homolog 1 (VPS32.1) (Arabidopsis thaliana (Mouse-ear cress)).